The primary structure comprises 1141 residues: Isoleucine--tRNA ligase, cytoplasmic (1141 aa).

Positions 50–60 (PFATGLPHYGH) match the 'HIGH' region motif. A 'KMSKS' region motif is present at residues 601 to 605 (KMSKS). Position 604 (lysine 604) interacts with ATP.

The protein belongs to the class-I aminoacyl-tRNA synthetase family.

The protein resides in the cytoplasm. It carries out the reaction tRNA(Ile) + L-isoleucine + ATP = L-isoleucyl-tRNA(Ile) + AMP + diphosphate. The protein is Isoleucine--tRNA ligase, cytoplasmic of Caenorhabditis elegans.